We begin with the raw amino-acid sequence, 107 residues long: MSITLSDSAAARVNAFLANRGKGFGLRLGVRTSGCSGMAYVLEFVDEPAAEDTVFEDKGVKVVIDGKSLQFLDGTQLDFVKEGLNEGFKFTNPNVKDECGCGESFNV.

Fe cation is bound by residues C35, C99, and C101.

This sequence belongs to the HesB/IscA family. As to quaternary structure, homodimer; may form tetramers and higher multimers. Fe cation is required as a cofactor.

Is able to transfer iron-sulfur clusters to apo-ferredoxin. Multiple cycles of [2Fe2S] cluster formation and transfer are observed, suggesting that IscA acts catalytically. Recruits intracellular free iron so as to provide iron for the assembly of transient iron-sulfur cluster in IscU in the presence of IscS, L-cysteine and the thioredoxin reductase system TrxA/TrxB. This chain is Iron-binding protein IscA, found in Klebsiella pneumoniae subsp. pneumoniae (strain ATCC 700721 / MGH 78578).